The following is a 274-amino-acid chain: Phosphatidylglycerol--prolipoprotein diacylglyceryl transferase (274 aa).

The next 4 helical transmembrane spans lie at 16 to 36 (VGLH…LSSF), 62 to 82 (FALG…VLFY), 94 to 114 (IIKI…LVIW), and 129 to 149 (LSVT…ALLI). A 1,2-diacyl-sn-glycero-3-phospho-(1'-sn-glycerol) is bound at residue Arg-150. A run of 3 helical transmembrane segments spans residues 184 to 204 (VQLY…WLCY), 213 to 233 (GYSA…AEFF), and 247 to 267 (LTIG…ILWI).

This sequence belongs to the Lgt family.

The protein localises to the cell inner membrane. It catalyses the reaction L-cysteinyl-[prolipoprotein] + a 1,2-diacyl-sn-glycero-3-phospho-(1'-sn-glycerol) = an S-1,2-diacyl-sn-glyceryl-L-cysteinyl-[prolipoprotein] + sn-glycerol 1-phosphate + H(+). It functions in the pathway protein modification; lipoprotein biosynthesis (diacylglyceryl transfer). Functionally, catalyzes the transfer of the diacylglyceryl group from phosphatidylglycerol to the sulfhydryl group of the N-terminal cysteine of a prolipoprotein, the first step in the formation of mature lipoproteins. In Chlamydia muridarum (strain MoPn / Nigg), this protein is Phosphatidylglycerol--prolipoprotein diacylglyceryl transferase.